We begin with the raw amino-acid sequence, 355 residues long: S-adenosylmethionine:tRNA ribosyltransferase-isomerase (355 aa).

It belongs to the QueA family. As to quaternary structure, monomer.

Its subcellular location is the cytoplasm. It catalyses the reaction 7-aminomethyl-7-carbaguanosine(34) in tRNA + S-adenosyl-L-methionine = epoxyqueuosine(34) in tRNA + adenine + L-methionine + 2 H(+). It participates in tRNA modification; tRNA-queuosine biosynthesis. Transfers and isomerizes the ribose moiety from AdoMet to the 7-aminomethyl group of 7-deazaguanine (preQ1-tRNA) to give epoxyqueuosine (oQ-tRNA). This chain is S-adenosylmethionine:tRNA ribosyltransferase-isomerase, found in Burkholderia orbicola (strain AU 1054).